Here is a 361-residue protein sequence, read N- to C-terminus: Single-stranded DNA-binding protein 2 (361 aa).

Lys-6 is modified (N6-acetyllysine). A LisH domain is found at 18–50 (AREKLALYVYEYLLHVGAQKSAQTFLSEIRWEK). Disordered stretches follow at residues 147-171 (GGVP…HPNM) and 194-361 (GAMR…TMSV). Gly residues predominate over residues 204–219 (GGPGMPGMNMGPGGGR). Residues 225 to 236 (TNANSIPYSSAS) show a composition bias toward polar residues. The segment covering 246 to 256 (GGGPPGTPIMP) has biased composition (pro residues). The segment covering 289–299 (GSDGPMGGLGG) has biased composition (gly residues). Polar residues predominate over residues 317 to 332 (ISKNSPNNMSLSNQPG). Ser-321 carries the phosphoserine modification. At Thr-333 the chain carries Phosphothreonine. Positions 346 to 361 (NPFQSESYSPSMTMSV) are enriched in polar residues.

In terms of tissue distribution, ubiquitous.

The protein resides in the nucleus. The sequence is that of Single-stranded DNA-binding protein 2 (SSBP2) from Homo sapiens (Human).